The following is a 472-amino-acid chain: Probable diguanylate cyclase DgcF (472 aa).

8 helical membrane-spanning segments follow: residues 21 to 41 (SIAI…LRLV), 44 to 64 (LSLF…YVWL), 90 to 110 (VSLA…LLVV), 128 to 148 (LFNY…IGSV), 167 to 187 (FSTG…GVLP), 198 to 218 (IALI…SLAF), 237 to 257 (LLTF…VIDI), and 273 to 293 (LGIA…AAIN). The region spanning 330–467 (QHLTVMLLDI…GRNRTSTMRY (138 aa)) is the GGDEF domain. Mg(2+) is bound by residues Asp338 and Ile339. Positions 346, 351, and 355 each coordinate substrate. Glu381 contacts Mg(2+).

Homodimer. Requires Mg(2+) as cofactor.

It is found in the cell membrane. The enzyme catalyses 2 GTP = 3',3'-c-di-GMP + 2 diphosphate. Its pathway is purine metabolism; 3',5'-cyclic di-GMP biosynthesis. In terms of biological role, catalyzes the synthesis of cyclic-di-GMP (c-di-GMP) via the condensation of 2 GTP molecules. This is Probable diguanylate cyclase DgcF from Escherichia coli O157:H7.